We begin with the raw amino-acid sequence, 169 residues long: Procalin (169 aa).

The signal sequence occupies residues 1 to 18 (MKTFIVITFIGILSYAYA). 3 disulfide bridges follow: C21-C125, C54-C168, and C83-C97.

This sequence belongs to the calycin superfamily. Triabin family. As to expression, expressed in salivary glands.

It is found in the secreted. The chain is Procalin from Hospesneotomae protracta (Western bloodsucking conenose).